The sequence spans 339 residues: MIAEMQTMLGPLWPVAWNLLKIIAIVGPLMGAVAYLTLAERKVIGFMQVRMGPNRVGYRGLLQPLADGVKLLMKEIIIPSAASRTLFLLGPVLAIAPALAAWAVVPFDLTLVLADIDAGLLYILAMTSVGVYGVIIAGWASNSKYAFLGAMRSAAQIVSYEIAMGFALVGVLMSANSLNLGKIVLAQSGGFWEWYWLPLFPLFIVYFISAVAETNRAPFDVAEGESEIVAGFHVEYSGMAFAVFFLAEYANMILVAMLAALMFLGGWLSPVPFLPDSILWLLFKVAALLFFFLWFRATFPRYRYDQIMRLGWKVFIPVTLVWILFVGAMMQTRWAYLFH.

Transmembrane regions (helical) follow at residues 19–39, 87–107, 120–140, 153–173, 191–211, 253–273, 275–295, and 310–330; these read LLKI…LTLA, FLLG…VVPF, LLYI…AGWA, SAAQ…GVLM, FWEW…ISAV, ILVA…PVPF, PDSI…FLWF, and LGWK…GAMM.

The protein belongs to the complex I subunit 1 family. In terms of assembly, NDH-1 is composed of 14 different subunits. Subunits NuoA, H, J, K, L, M, N constitute the membrane sector of the complex.

It is found in the cell inner membrane. The catalysed reaction is a quinone + NADH + 5 H(+)(in) = a quinol + NAD(+) + 4 H(+)(out). In terms of biological role, NDH-1 shuttles electrons from NADH, via FMN and iron-sulfur (Fe-S) centers, to quinones in the respiratory chain. The immediate electron acceptor for the enzyme in this species is believed to be ubiquinone. Couples the redox reaction to proton translocation (for every two electrons transferred, four hydrogen ions are translocated across the cytoplasmic membrane), and thus conserves the redox energy in a proton gradient. This subunit may bind ubiquinone. This is NADH-quinone oxidoreductase subunit H from Methylobacillus flagellatus (strain ATCC 51484 / DSM 6875 / VKM B-1610 / KT).